A 623-amino-acid chain; its full sequence is (-)-limonene synthase TPS1, chloroplastic (623 aa).

A chloroplast-targeting transit peptide spans 1-60 (MQCIAFHQFASSSSLPIWSSIDNRFTPKTSITSISKPKPKLKSKSNLKSRSRSSTCYPIQ). The disordered stretch occupies residues 29–52 (TSITSISKPKPKLKSKSNLKSRSR). Residues 37–51 (PKPKLKSKSNLKSRS) show a composition bias toward basic residues. Positions 337, 374, 378, 516, and 519 each coordinate (2E)-geranyl diphosphate. Mg(2+)-binding residues include Asp-374 and Asp-378. Positions 374-378 (DDMHD) match the DDXXD motif motif. Asp-519, Thr-523, and Glu-527 together coordinate Mg(2+).

This sequence belongs to the terpene synthase family. Tpsb subfamily. Mg(2+) serves as cofactor. Requires Mn(2+) as cofactor. It depends on K(+) as a cofactor. As to expression, trichome.

The protein resides in the plastid. Its subcellular location is the chloroplast. It catalyses the reaction (2E)-geranyl diphosphate = (4S)-limonene + diphosphate. The enzyme catalyses (2E)-geranyl diphosphate = terpinolene + diphosphate. The catalysed reaction is (2E)-geranyl diphosphate = (1R,5R)-alpha-pinene + diphosphate. It carries out the reaction (2E)-geranyl diphosphate = (1R,5R)-beta-pinene + diphosphate. It catalyses the reaction (2E)-geranyl diphosphate = beta-myrcene + diphosphate. The enzyme catalyses (2E)-geranyl diphosphate = (4R)-limonene + diphosphate. The protein operates within secondary metabolite biosynthesis; terpenoid biosynthesis. It functions in the pathway terpene metabolism; (4S)-limonene biosynthesis; (4S)-limonene from geranyl diphosphate: step 1/1. Involved in monoterpene (C10) olefins biosynthesis, constituants of cannabinoids and terpenoids-rich resins. Catalyzes mainly the conversion of (2E)-geranyl diphosphate to (-)-limonene, and also produces minor products such as (+)-limonene, (+)-alpha-pinene, terpinolene, (+)-beta-pinene and beta-myrcene. In Cannabis sativa (Hemp), this protein is (-)-limonene synthase TPS1, chloroplastic.